A 329-amino-acid chain; its full sequence is Fructose-1,6-bisphosphatase class 1 (329 aa).

Residues Glu84, Asp103, Leu105, and Asp106 each coordinate Mg(2+). Residues Asp106 to Ser109, Asn196, and Lys262 each bind substrate. Glu268 lines the Mg(2+) pocket.

The protein belongs to the FBPase class 1 family. In terms of assembly, homotetramer. The cofactor is Mg(2+).

The protein localises to the cytoplasm. It carries out the reaction beta-D-fructose 1,6-bisphosphate + H2O = beta-D-fructose 6-phosphate + phosphate. The protein operates within carbohydrate biosynthesis; gluconeogenesis. This is Fructose-1,6-bisphosphatase class 1 from Shewanella sediminis (strain HAW-EB3).